Reading from the N-terminus, the 2829-residue chain is Adenomatous polyposis coli homolog (2829 aa).

Residues 4-58 adopt a coiled-coil conformation; the sequence is ASYDQLVKQVEALTMENTNLRQELEDNSNHLTKLETEATNMKEVLKQLQGSIEDE. Disordered regions lie at residues 80–114 and 240–300; these read SNIPAGKARPKMSMRSYGSREGSLSGHSGECSPVP and AEAA…NSTY. Positions 133–244 form a coiled coil; the sequence is YMEELEKERL…LQSQVAEAAE (112 aa). Residues 242 to 262 are compositionally biased toward basic and acidic residues; the sequence is AAERTPQSKHDAGSRDAEKLP. Residues 291 to 300 show a composition bias toward polar residues; that stretch reads TSVMSSNSTY. ARM repeat units follow at residues 343-384, 462-504, 516-555, 559-599, 603-646, 652-691, and 694-733; these read QDSC…ARAS, EEHR…RYAG, ANKATLCSMKSCMRALVAQLKSESEDLQQVIASVLRNLSW, VNSK…NLSA, ENKA…NVSS, EDHRQILRENNCLQTLLQHLKSHSLTIVSNACGTLWNLSA, and AKDQEGLWDMGAVSMLKNLIHSKHKMIAMGSAAALRNLMA. A compositionally biased stretch (polar residues) spans 833 to 842; that stretch reads TVLPGSSSPR. Disordered stretches follow at residues 833–877, 901–941, 963–988, 1032–1260, 1278–1382, 1424–1469, 1533–1612, 1657–1718, 1754–1842, 1875–1950, 1963–2012, 2041–2069, 2154–2627, and 2686–2829; these read TVLP…SKRI, QENR…TKAE, SLNSVSSTEGYGKRGQVKPSVESYSE, SDEQ…PSIN, RGSS…PEHY, IISP…EERG, LEND…RKPS, TSLS…EDKA, SAAT…SPHH, KAEL…KMEN, NSSL…FHVE, SSAMPKKRKPSKIKNEVGKSRSNSVGGIL, EEKT…TIAE, and KEEA…VTSV. A compositionally biased stretch (basic and acidic residues) spans 848 to 857; the sequence is SRPEKDRERT. 2 stretches are compositionally biased toward polar residues: residues 863–877 and 923–941; these read YHSTTESSGNSSKRI and RKPSSNHPQSNPFTFTKAE. The segment covering 1034-1047 has biased composition (polar residues); the sequence is EQLNSGRQSPTQNE. Basic and acidic residues predominate over residues 1048–1067; sequence RWSRPKHIIDSEMKQSEQRQ. Polar residues-rich tracts occupy residues 1068-1079 and 1106-1117; these read PRTTKTTYSSYT and RGANNQVDQSRV. The segment covering 1150-1159 has biased composition (acidic residues); the sequence is SEEEQQEDET. Residues 1171 to 1188 are compositionally biased toward basic and acidic residues; sequence ASEEHHGEQPIDYSRKYS. The span at 1190–1208 shows a compositional bias: polar residues; that stretch reads DVPSSAQKPSFPYSNNSSK. The span at 1217–1230 shows a compositional bias: low complexity; the sequence is SSNSNTPTPSPNSN. 3 stretches are compositionally biased toward polar residues: residues 1231 to 1244, 1301 to 1310, and 1340 to 1351; these read RQNQLHPNSAQSRP, GQESNNTLQI, and NRLQTSNISPSD. Positions 1361–1372 are enriched in low complexity; the sequence is SSGAKSPSKSGA. Composition is skewed to basic and acidic residues over residues 1454–1469 and 1537–1566; these read AKKDGSKPIVPDEERG and QGNKAEPEKEFIDNKAKKEDKRSEQEKDML. Residues 1545-1578 are a coiled coil; sequence KEFIDNKAKKEDKRSEQEKDMLDDTDDDIDILEE. Residues 1567–1577 show a composition bias toward acidic residues; the sequence is DDTDDDIDILE. Residues 1597–1608 show a composition bias toward pro residues; it reads QPTPGKPPPPVA. The span at 1671-1683 shows a compositional bias: polar residues; the sequence is PTNDQPNTDSLST. Over residues 1684–1703 the composition is skewed to basic and acidic residues; sequence DLEKRDTIPTEGRSTDDTDA. The segment covering 1754 to 1765 has biased composition (polar residues); sequence SAATSSGNSRSM. Basic and acidic residues-rich tracts occupy residues 1786 to 1795 and 1875 to 1898; these read FKERLKKNTE and KAELRKEKGTKDTDQKVKYKHENR. 2 stretches are compositionally biased toward polar residues: residues 1926 to 1935 and 1984 to 2003; these read KPTSFSSAAK and LKQTGTSETQLGLRRPQTSG. Basic and acidic residues predominate over residues 2168–2186; sequence KPAEKSALENKKTEEEPKG. Positions 2199-2222 are enriched in polar residues; sequence TGKSRSSSDFSSHCKQSVQTNMPS. 3 stretches are compositionally biased toward low complexity: residues 2256–2275, 2283–2322, and 2346–2359; these read PSKGSNENPSSSSSPKGTKP, GSRPSSTPGGSSKGNSRSGSRDSASSRPSPQPLSRPLQSP, and TTSPSTASTKSSGS. Composition is skewed to polar residues over residues 2360-2408 and 2415-2424; these read GRMS…TGSN and RMSSTKSSGS. Over residues 2456–2474 the composition is skewed to low complexity; that stretch reads SASFESLSSSSRADSPPRS. Residues 2549–2562 are compositionally biased toward polar residues; the sequence is SSSLPRVSTWRRTG. Residues 2563–2573 show a composition bias toward low complexity; that stretch reads SSSSILSASSE. Basic and acidic residues predominate over residues 2574–2585; it reads SSEKAKSEDEKQ. Over residues 2616–2627 the composition is skewed to polar residues; it reads TPSNGSSSTIAE. Basic and acidic residues predominate over residues 2686-2695; the sequence is KEEAAKDCHT. The span at 2730–2743 shows a compositional bias: polar residues; it reads LINNQQETNENTVA. Residues 2749-2760 are compositionally biased toward low complexity; that stretch reads SSSSSSKHSSPS. A compositionally biased stretch (polar residues) spans 2770 to 2798; that stretch reads FNYNPSPRKSNGENSTSRPSQIPTPVTNS.

This sequence belongs to the adenomatous polyposis coli (APC) family.

Its function is as follows. Promotes rapid degradation of CTNNB1 and participates in Wnt signaling as a negative regulator. The polypeptide is Adenomatous polyposis coli homolog (apc) (Xenopus laevis (African clawed frog)).